A 233-amino-acid polypeptide reads, in one-letter code: Lipoprotein-releasing system ATP-binding protein LolD (233 aa).

An ABC transporter domain is found at Leu-6–Glu-233. Gly-42–Ser-49 provides a ligand contact to ATP.

The protein belongs to the ABC transporter superfamily. Lipoprotein translocase (TC 3.A.1.125) family. In terms of assembly, the complex is composed of two ATP-binding proteins (LolD) and two transmembrane proteins (LolC and LolE).

The protein resides in the cell inner membrane. Part of the ABC transporter complex LolCDE involved in the translocation of mature outer membrane-directed lipoproteins, from the inner membrane to the periplasmic chaperone, LolA. Responsible for the formation of the LolA-lipoprotein complex in an ATP-dependent manner. This chain is Lipoprotein-releasing system ATP-binding protein LolD, found in Shigella dysenteriae serotype 1 (strain Sd197).